The chain runs to 347 residues: Heat-inducible transcription repressor HrcA (347 aa).

This sequence belongs to the HrcA family.

Negative regulator of class I heat shock genes (grpE-dnaK-dnaJ and groELS operons). Prevents heat-shock induction of these operons. This chain is Heat-inducible transcription repressor HrcA, found in Lactobacillus delbrueckii subsp. bulgaricus (strain ATCC BAA-365 / Lb-18).